We begin with the raw amino-acid sequence, 294 residues long: Putative glutamine amidotransferase HI_1037 (294 aa).

Cys18 is a catalytic residue. The Glutamine amidotransferase type-2 domain occupies 18–266 (CQLLGMNCNT…NGGFVFFKNG (249 aa)).

The polypeptide is Putative glutamine amidotransferase HI_1037 (Haemophilus influenzae (strain ATCC 51907 / DSM 11121 / KW20 / Rd)).